The chain runs to 42 residues: Alpha-lactalbumin I (42 aa).

The 42-residue stretch at 1 to 42 (IDYRKCQASQILKEHGMDKVIPLPELVCTMFHISGLSPQAEV) folds into the C-type lysozyme domain.

The protein belongs to the glycosyl hydrolase 22 family. In terms of assembly, lactose synthase (LS) is a heterodimer of a catalytic component, beta1,4-galactosyltransferase (beta4Gal-T1) and a regulatory component, alpha-lactalbumin (LA). Mammary gland specific. Secreted in milk.

The protein resides in the secreted. Its function is as follows. Regulatory subunit of lactose synthase, changes the substrate specificity of galactosyltransferase in the mammary gland making glucose a good acceptor substrate for this enzyme. This enables LS to synthesize lactose, the major carbohydrate component of milk. In other tissues, galactosyltransferase transfers galactose onto the N-acetylglucosamine of the oligosaccharide chains in glycoproteins. This chain is Alpha-lactalbumin I (LALBA), found in Macropus giganteus (Eastern gray kangaroo).